Consider the following 355-residue polypeptide: 3-dehydroquinate synthase (355 aa).

NAD(+)-binding positions include 71–76, 105–109, 129–130, K142, and K151; these read EGEERK, GVVGD, and TS. Positions 184, 246, and 263 each coordinate Zn(2+).

The protein belongs to the sugar phosphate cyclases superfamily. Dehydroquinate synthase family. Co(2+) serves as cofactor. Requires Zn(2+) as cofactor. It depends on NAD(+) as a cofactor.

The protein resides in the cytoplasm. It carries out the reaction 7-phospho-2-dehydro-3-deoxy-D-arabino-heptonate = 3-dehydroquinate + phosphate. It participates in metabolic intermediate biosynthesis; chorismate biosynthesis; chorismate from D-erythrose 4-phosphate and phosphoenolpyruvate: step 2/7. Functionally, catalyzes the conversion of 3-deoxy-D-arabino-heptulosonate 7-phosphate (DAHP) to dehydroquinate (DHQ). The chain is 3-dehydroquinate synthase from Streptococcus pneumoniae (strain 70585).